The following is a 189-amino-acid chain: Probable nicotinate-nucleotide adenylyltransferase (189 aa).

Belongs to the NadD family.

The catalysed reaction is nicotinate beta-D-ribonucleotide + ATP + H(+) = deamido-NAD(+) + diphosphate. Its pathway is cofactor biosynthesis; NAD(+) biosynthesis; deamido-NAD(+) from nicotinate D-ribonucleotide: step 1/1. Catalyzes the reversible adenylation of nicotinate mononucleotide (NaMN) to nicotinic acid adenine dinucleotide (NaAD). This chain is Probable nicotinate-nucleotide adenylyltransferase, found in Staphylococcus aureus (strain N315).